Reading from the N-terminus, the 477-residue chain is Adenylyl cyclase-associated protein 2 (477 aa).

Residue Ala-2 is modified to N-acetylalanine. Disordered stretches follow at residues 225 to 261 (LSSG…PSRS) and 274 to 321 (TKGL…SQKH). Residues 230 to 246 (GLPPPPPPLPPPGPPPL) are compositionally biased toward pro residues. Over residues 298–320 (QTQSPTKSHTPSPTSPKSYPSQK) the composition is skewed to low complexity. Residues Ser-301 and Ser-309 each carry the phosphoserine modification. The region spanning 317-455 (PSQKHAPVLE…QDGDYREFPI (139 aa)) is the C-CAP/cofactor C-like domain.

It belongs to the CAP family.

It is found in the cell membrane. Its function is as follows. Involved in the regulation of actin polymerization. The sequence is that of Adenylyl cyclase-associated protein 2 (CAP2) from Homo sapiens (Human).